The sequence spans 496 residues: Protein nucleotidyltransferase YdiU (496 aa).

Positions 98, 100, 101, 116, 128, 129, 179, and 186 each coordinate ATP. Aspartate 259 acts as the Proton acceptor in catalysis. The Mg(2+) site is built by asparagine 260 and aspartate 269. Aspartate 269 serves as a coordination point for ATP.

It belongs to the SELO family. Mg(2+) is required as a cofactor. Mn(2+) serves as cofactor.

The enzyme catalyses L-seryl-[protein] + ATP = 3-O-(5'-adenylyl)-L-seryl-[protein] + diphosphate. The catalysed reaction is L-threonyl-[protein] + ATP = 3-O-(5'-adenylyl)-L-threonyl-[protein] + diphosphate. It catalyses the reaction L-tyrosyl-[protein] + ATP = O-(5'-adenylyl)-L-tyrosyl-[protein] + diphosphate. It carries out the reaction L-histidyl-[protein] + UTP = N(tele)-(5'-uridylyl)-L-histidyl-[protein] + diphosphate. The enzyme catalyses L-seryl-[protein] + UTP = O-(5'-uridylyl)-L-seryl-[protein] + diphosphate. The catalysed reaction is L-tyrosyl-[protein] + UTP = O-(5'-uridylyl)-L-tyrosyl-[protein] + diphosphate. Its function is as follows. Nucleotidyltransferase involved in the post-translational modification of proteins. It can catalyze the addition of adenosine monophosphate (AMP) or uridine monophosphate (UMP) to a protein, resulting in modifications known as AMPylation and UMPylation. The sequence is that of Protein nucleotidyltransferase YdiU from Albidiferax ferrireducens (strain ATCC BAA-621 / DSM 15236 / T118) (Rhodoferax ferrireducens).